The chain runs to 273 residues: Coiled-coil domain-containing protein 3 (273 aa).

The signal sequence occupies residues 1–21 (MPLPLLLAALCLAASPAPARA). The N-linked (GlcNAc...) asparagine glycan is linked to N100. Positions 188–250 (SVQKALFEEE…VNQKLNEKLG (63 aa)) form a coiled coil.

As to quaternary structure, homodimer. In terms of processing, N-glycosylated. As to expression, expressed in aorta and adipose tissue. Enriched in mature adipocytes. Over-expressed in adipose tissue from either hormonally-induced or nutritionally-regulated obese mice models.

It is found in the secreted. In terms of biological role, negatively regulates TNF-alpha-induced pro-inflammatory response in endothelial cells (ECs) via inhibition of TNF-alpha-induced NF-kappaB activation in ECs. Positively regulates lipid accumulation in adipose cells. The chain is Coiled-coil domain-containing protein 3 (Ccdc3) from Mus musculus (Mouse).